Consider the following 559-residue polypeptide: Berberine bridge enzyme-like A (559 aa).

The first 21 residues, Met1–Gly21, serve as a signal peptide directing secretion. 2 N-linked (GlcNAc...) asparagine glycosylation sites follow: Asn25 and Asn37. A disulfide bridge links Cys29 with Cys86. The FAD-binding PCMH-type domain maps to Phe64–Val240. His101 is modified (pros-8alpha-FAD histidine). Asn321, Asn355, and Asn494 each carry an N-linked (GlcNAc...) asparagine glycan.

Belongs to the oxygen-dependent FAD-linked oxidoreductase family. It depends on FAD as a cofactor. In terms of tissue distribution, mostly expressed in roots.

Its subcellular location is the vacuole. Its pathway is alkaloid biosynthesis; nicotine biosynthesis. Functionally, involved in the biosynthesis of pyridine alkaloid natural products, leading mainly to the production of anabasine, anatabine, nicotine and nornicotine, effective deterrents against herbivores with antiparasitic and pesticide properties (neurotoxins); nornicotine serves as the precursor in the synthesis of the carcinogen compound N'-nitrosonornicotine (NNN). Catalyzes a late oxidation step subsequent to the pyridine ring condensation reaction in the biosynthesis of alkaloids. This Nicotiana tabacum (Common tobacco) protein is Berberine bridge enzyme-like A.